A 501-amino-acid chain; its full sequence is ADP,ATP carrier protein 3 (501 aa).

Transmembrane regions (helical) follow at residues 23-43 (LKLF…FGAL), 59-79 (IISL…TVLY), 90-110 (YIFY…AYII), 146-166 (YALM…LMFW), 183-203 (PVLG…LVFF), 227-247 (IMLQ…MLLF), 293-313 (IALL…PWKA), 326-346 (FNFM…FMVI), 361-381 (LLTP…IIFI), 383-403 (EIGA…VGAI), 446-466 (FGKS…PTAT), and 470-490 (IIIY…WNVI).

This sequence belongs to the ADP/ATP translocase tlc family.

It is found in the cell membrane. Its function is as follows. Provides the rickettsial cell with host ATP in exchange for rickettsial ADP. This is an obligate exchange system. This energy acquiring activity is an important component of rickettsial parasitism. In Rickettsia felis (strain ATCC VR-1525 / URRWXCal2) (Rickettsia azadi), this protein is ADP,ATP carrier protein 3 (tlcC).